Reading from the N-terminus, the 236-residue chain is Sperm flagellar protein 1 (236 aa).

In terms of domain architecture, Calponin-homology (CH) spans 7–112; that stretch reads EEALHQLYLW…VLIPLRQRLE (106 aa). A disordered region spans residues 118 to 177; that stretch reads RKQGIGSLQELAPQDGTDYMDVGLSQKARGEGVPDPQGRGQLREGRLPVPRPPGDSQALQ. Residues 183–236 form an essential for homodimerization and microtubule bundling activity region; the sequence is ILQIAEKEQELLASQETVQVLQMKVRRLEHLLQLKNVRIEDLSRRLQQAERKQR.

As to quaternary structure, homodimer. Interacts with actin, TJP1, CGN and CDH1.

The protein localises to the cytoplasm. It is found in the cell projection. The protein resides in the cilium. Its subcellular location is the flagellum. It localises to the cytoskeleton. The protein localises to the cilium axoneme. It is found in the apical cell membrane. The protein resides in the basolateral cell membrane. Its subcellular location is the stress fiber. It localises to the microvillus. The protein localises to the lamellipodium. It is found in the filopodium. Its function is as follows. Microtubule-associated protein involved in the stabilization of microtubules along the axis of migration during radial intercalation. Promotes the establishment and stabilization of an axis of microtubules required for the active migration of cells into the outer epithelium. Microtubule-associated protein that promotes microtubule bundling and stabilizes microtubules against depolymerization in response to cold shock. Essential for ciliary central apparatus formation which requires both its microtubule-binding and bundling activities and for ciliary localization of HYDIN and SPAG6 in ependymal cilia. Binds actin in intestinal epithelial cells (IECs), essential for IECs survival and contributes to formation of filopodia and lamellipodia in migrating IECs. Regulates planar cell polarity signaling pathway and asymmetric microtubule accumulation in ciliated epithelia. This Bos taurus (Bovine) protein is Sperm flagellar protein 1 (SPEF1).